The sequence spans 338 residues: Lipoate-protein ligase A (338 aa).

Residues 29-216 (PATQRVLFLW…AFFAHYGERV (188 aa)) form the BPL/LPL catalytic domain. ATP-binding positions include Arg-71, 76 to 79 (GAVF), and Lys-134. Residue Lys-134 coordinates (R)-lipoate.

It belongs to the LplA family. As to quaternary structure, monomer.

It is found in the cytoplasm. The catalysed reaction is L-lysyl-[lipoyl-carrier protein] + (R)-lipoate + ATP = N(6)-[(R)-lipoyl]-L-lysyl-[lipoyl-carrier protein] + AMP + diphosphate + H(+). The protein operates within protein modification; protein lipoylation via exogenous pathway; protein N(6)-(lipoyl)lysine from lipoate: step 1/2. Its pathway is protein modification; protein lipoylation via exogenous pathway; protein N(6)-(lipoyl)lysine from lipoate: step 2/2. Functionally, catalyzes both the ATP-dependent activation of exogenously supplied lipoate to lipoyl-AMP and the transfer of the activated lipoyl onto the lipoyl domains of lipoate-dependent enzymes. The chain is Lipoate-protein ligase A from Salmonella paratyphi C (strain RKS4594).